Reading from the N-terminus, the 138-residue chain is Small ribosomal subunit protein uS11 (138 aa).

Residues Met1 to Thr12 are compositionally biased toward polar residues. Residues Met1–Asn37 are disordered. Residues Lys13–Lys22 show a composition bias toward basic residues.

This sequence belongs to the universal ribosomal protein uS11 family. As to quaternary structure, part of the 30S ribosomal subunit. Interacts with proteins S7 and S18. Binds to IF-3.

Located on the platform of the 30S subunit, it bridges several disparate RNA helices of the 16S rRNA. Forms part of the Shine-Dalgarno cleft in the 70S ribosome. This Roseiflexus castenholzii (strain DSM 13941 / HLO8) protein is Small ribosomal subunit protein uS11.